We begin with the raw amino-acid sequence, 308 residues long: Taste receptor type 2 member 10 (308 aa).

At 1 to 6 (MLSVVE) the chain is on the extracellular side. Residues 7 to 27 (GIFIFVVISESVFGVLGNGFI) form a helical membrane-spanning segment. The Cytoplasmic segment spans residues 28-42 (GLVNCIDCAKNKLST). A helical membrane pass occupies residues 43 to 63 (IGFILTGLAISRIFLIWVIIT). Over 64-100 (DGFIQIFSPDIYASGNLIEYISYIWVIGNQSSMWFAT) the chain is Extracellular. Asparagine 92 is a glycosylation site (N-linked (GlcNAc...) asparagine). A helical membrane pass occupies residues 101 to 121 (SLSIFYFLKIANFSNYIFLWL). The Cytoplasmic portion of the chain corresponds to 122-126 (KSRTN). Residues 127-147 (MVLPFMMAFLLISSLLNFAHI) form a helical membrane-spanning segment. Over 148–179 (VKILNDHKMKNDTVWHLNMYKSEYFIKQILLN) the chain is Extracellular. Residue asparagine 158 is glycosylated (N-linked (GlcNAc...) asparagine). Residues 180–200 (LGVIFFFTLSLITCVLLIISL) traverse the membrane as a helical segment. Residues 201–227 (WRHNRQMQSNVTGLRDSNTEAHVKAMK) lie on the Cytoplasmic side of the membrane. The helical transmembrane segment at 228-248 (VLISFIILFILYFIGMALEIS) threads the bilayer. The Extracellular segment spans residues 249-257 (RFTVPENKL). A helical transmembrane segment spans residues 258 to 278 (LLMFGMTTTAIYPWGHSFILI). The Cytoplasmic portion of the chain corresponds to 279–308 (LGNSKLKQASLRVLQQLKCCEKRKKSQSHI).

The protein belongs to the G-protein coupled receptor T2R family.

It is found in the membrane. Its function is as follows. Receptor that may play a role in the perception of bitterness and is gustducin-linked. May play a role in sensing the chemical composition of the gastrointestinal content. The activity of this receptor may stimulate alpha gustducin, mediate PLC-beta-2 activation and lead to the gating of TRPM5. This Pongo pygmaeus (Bornean orangutan) protein is Taste receptor type 2 member 10 (TAS2R10).